The chain runs to 462 residues: NAD-capped RNA hydrolase NUDT12 (462 aa).

3 ANK repeats span residues 11–40, 45–74, and 78–98; these read EIVT…SLLN, NGWT…DRSI, and SRQT…ANLL. At K185 the chain carries N6-succinyllysine. The Zn(2+) site is built by C284 and C287. An N6-succinyllysine modification is found at K292. Residues C302 and C307 each coordinate Zn(2+). Substrate-binding positions include Y318, 354-356, E370, E374, and E415; that span reads AGF. Residues 319-453 enclose the Nudix hydrolase domain; sequence PRVDPVVIMQ…SRAIAHQLIK (135 aa). 4 residues coordinate Mg(2+): A354, E370, E374, and E415. The Nudix box motif lies at 355 to 376; sequence GFIEPGETIEDAVRREVEEESG. Positions 460–462 match the Microbody targeting signal motif; it reads PNL.

The protein belongs to the Nudix hydrolase family. NudC subfamily. As to quaternary structure, homodimer. Homodimerization is essential for its catalytic activity and protein stability. Interacts (via ANK repeats) with BLMH. Requires Mg(2+) as cofactor. The cofactor is Zn(2+).

Its subcellular location is the cytoplasm. It is found in the peroxisome. The protein localises to the cytoplasmic granule. It carries out the reaction a 5'-end NAD(+)-phospho-ribonucleoside in mRNA + H2O = a 5'-end phospho-adenosine-phospho-ribonucleoside in mRNA + beta-nicotinamide D-ribonucleotide + 2 H(+). The enzyme catalyses NAD(+) + H2O = beta-nicotinamide D-ribonucleotide + AMP + 2 H(+). The catalysed reaction is NADH + H2O = reduced beta-nicotinamide D-ribonucleotide + AMP + 2 H(+). It catalyses the reaction NADPH + H2O = reduced beta-nicotinamide D-ribonucleotide + adenosine 2',5'-bisphosphate + 2 H(+). Functionally, mRNA decapping enzyme that specifically removes the nicotinamide adenine dinucleotide (NAD) cap from a subset of mRNAs by hydrolyzing the diphosphate linkage to produce nicotinamide mononucleotide (NMN) and 5' monophosphate mRNA. The NAD-cap is present at the 5'-end of some RNAs; in contrast to the canonical N7 methylguanosine (m7G) cap, the NAD cap promotes mRNA decay. Preferentially acts on NAD-capped transcripts in response to nutrient stress. Also acts on free nicotinamide adenine dinucleotide molecules: hydrolyzes NAD(H) into NMN(H) and AMP, and NADPH into NMNH and 2',5'-ADP. May act to regulate the concentration of peroxisomal nicotinamide nucleotide cofactors required for oxidative metabolism in this organelle. Regulates the levels of circadian clock components PER1, PER2, PER3 and CRY2 in the liver. This Homo sapiens (Human) protein is NAD-capped RNA hydrolase NUDT12.